The chain runs to 233 residues: Glycerol-3-phosphate acyltransferase 5 (233 aa).

Helical transmembrane passes span 3-23 (LVFI…MAYL), 69-89 (MILL…VGLF), 116-136 (LVMA…FGLF), 143-163 (VFLG…FFGI), and 168-188 (TISW…LMAP).

This sequence belongs to the PlsY family. In terms of assembly, probably interacts with PlsX.

The protein resides in the cell membrane. The catalysed reaction is an acyl phosphate + sn-glycerol 3-phosphate = a 1-acyl-sn-glycero-3-phosphate + phosphate. The protein operates within lipid metabolism; phospholipid metabolism. Catalyzes the transfer of an acyl group from acyl-phosphate (acyl-PO(4)) to glycerol-3-phosphate (G3P) to form lysophosphatidic acid (LPA). This enzyme utilizes acyl-phosphate as fatty acyl donor, but not acyl-CoA or acyl-ACP. The chain is Glycerol-3-phosphate acyltransferase 5 from Dehalococcoides mccartyi (strain ATCC BAA-2266 / KCTC 15142 / 195) (Dehalococcoides ethenogenes (strain 195)).